We begin with the raw amino-acid sequence, 537 residues long: Tyrosine-protein kinase Fyn (537 aa).

The N-myristoyl glycine moiety is linked to residue Gly-2. 2 S-palmitoyl cysteine lipidation sites follow: Cys-3 and Cys-6. Position 12 is a phosphothreonine; by PKC (Thr-12). One can recognise an SH3 domain in the interval 82-143 (TGVTLFVALY…PSNYVAPVDS (62 aa)). The region spanning 149 to 246 (WYFGKLGRKD…GLCCRLVVPC (98 aa)) is the SH2 domain. A Protein kinase domain is found at 271–524 (LQLIKRLGNG…YLQAFLEDYF (254 aa)). Residues 277–285 (LGNGQFGEV) and Lys-299 contribute to the ATP site. Catalysis depends on Asp-390, which acts as the Proton acceptor. Phosphotyrosine; by autocatalysis is present on Tyr-420. Tyr-531 carries the post-translational modification Phosphotyrosine.

This sequence belongs to the protein kinase superfamily. Tyr protein kinase family. SRC subfamily. As to quaternary structure, associates through its SH3 domain, to the p85 subunit of phosphatidylinositol 3-kinase. The cofactor is Mn(2+).

The enzyme catalyses L-tyrosyl-[protein] + ATP = O-phospho-L-tyrosyl-[protein] + ADP + H(+). Inhibited by phosphorylation of Tyr-531 by leukocyte common antigen and activated by dephosphorylation of this site. Tyrosine-protein kinase implicated in the control of cell growth. Plays a role in the regulation of intracellular calcium levels. Required in brain development and mature brain function with important roles in the regulation of axon growth, axon guidance, and neurite extension. In Xiphophorus hellerii (Green swordtail), this protein is Tyrosine-protein kinase Fyn (fyn).